Here is a 321-residue protein sequence, read N- to C-terminus: MTKYALVGDVGGTNARLALCDIDTGEISQAKTYSGLDYPSLEAVVRVYLDEHQVGVEDGCIAIACPITGDWVAMTNHTWAFSIAEMKKNLGFAHLEIINDFTAVSMAIPMLKPEHLIQFGGAEPVEGKPIAVYGAGTGLGVSHLVHVDKRWISLPGEGGHVDFAPNSEEEGIILHELRAELGHVSAERVLSGPGLVYLYRAIVKSDNRLPENLQPKDITERALADSCTDCRRALSLFCVIMGRFGGNLALNLGTFGGVYIAGGIVPRFLEFFKASGFRGGFEDKGRFKSYVQDIPVYLIVHDNPGLLGSGAHLRQTLGQYL.

An ATP-binding site is contributed by 8–13 (GDVGGT).

The protein belongs to the bacterial glucokinase family.

It localises to the cytoplasm. The catalysed reaction is D-glucose + ATP = D-glucose 6-phosphate + ADP + H(+). This is Glucokinase from Enterobacter sp. (strain 638).